The primary structure comprises 209 residues: Ubiquitin-conjugating enzyme E2 S (209 aa).

The 147-residue stretch at 14–160 (QTIRQVMREL…ARMMTEIHAQ (147 aa)) folds into the UBC core domain. Cys-98 functions as the Glycyl thioester intermediate in the catalytic mechanism. The segment at 165–194 (GVGAASDAKDDDGPSTKKHAGLDKKLQDKK) is disordered. The segment covering 171 to 194 (DAKDDDGPSTKKHAGLDKKLQDKK) has biased composition (basic and acidic residues).

Belongs to the ubiquitin-conjugating enzyme family.

It catalyses the reaction S-ubiquitinyl-[E1 ubiquitin-activating enzyme]-L-cysteine + [E2 ubiquitin-conjugating enzyme]-L-cysteine = [E1 ubiquitin-activating enzyme]-L-cysteine + S-ubiquitinyl-[E2 ubiquitin-conjugating enzyme]-L-cysteine.. Its pathway is protein modification; protein ubiquitination. Its function is as follows. Catalyzes the covalent attachment of ubiquitin to other proteins. Acts as an essential factor of the anaphase promoting complex/cyclosome (APC/C), a cell cycle-regulated ubiquitin ligase that controls progression through mitosis. Acts by specifically elongating polyubiquitin chains initiated by the E2 enzyme vih/UbcH10 on APC/C substrates, enhancing the degradation of APC/C substrates by the proteasome and promoting mitotic exit. In Drosophila persimilis (Fruit fly), this protein is Ubiquitin-conjugating enzyme E2 S.